A 511-amino-acid polypeptide reads, in one-letter code: Cytochrome P450 monooxygenase PUL2 (511 aa).

The chain crosses the membrane as a helical span at residues 14–34 (WMAFVYFTPVLFVVLYLLKEW). Asn-116, Asn-141, and Asn-442 each carry an N-linked (GlcNAc...) asparagine glycan. Cys-462 is a binding site for heme.

It belongs to the cytochrome P450 family. Heme serves as cofactor.

The protein localises to the membrane. The protein operates within siderophore biosynthesis. In terms of biological role, cytochrome P450 monooxygenase; part of the PUL gene cluster that mediates the formation of pulcherrimin, a red iron-containing pigment composed of two cyclized and modified leucine molecules that acts as a siderophore, a chelator that binds iron outside the cell for subsequent uptake. Two leucine molecules are cyclized via a cyclodipeptide synthase, and the resulting diketopiperazine is oxidized by a cytochrome P450 monooxygenase to generate pulcherriminic acid (PA), which can then spontaneously bind iron to form pulcherrimin. The probable cyclodipeptide synthase PUL1 and the cytochrome P450 monooxygenase PUL2 encode the enzymes responsible for the two-step pulcherrimin biosynthesis pathway. The chain is Cytochrome P450 monooxygenase PUL2 from Kluyveromyces lactis (strain ATCC 8585 / CBS 2359 / DSM 70799 / NBRC 1267 / NRRL Y-1140 / WM37) (Yeast).